The primary structure comprises 508 residues: ATP synthase subunit alpha, mitochondrial (508 aa).

171–178 (GDRQTGKT) is a binding site for ATP.

This sequence belongs to the ATPase alpha/beta chains family. F-type ATPases have 2 components, CF(1) - the catalytic core - and CF(0) - the membrane proton channel. CF(1) has five subunits: alpha(3), beta(3), gamma(1), delta(1), epsilon(1). CF(0) has three main subunits: a, b and c.

It is found in the mitochondrion. It localises to the mitochondrion inner membrane. Mitochondrial membrane ATP synthase (F(1)F(0) ATP synthase or Complex V) produces ATP from ADP in the presence of a proton gradient across the membrane which is generated by electron transport complexes of the respiratory chain. F-type ATPases consist of two structural domains, F(1) - containing the extramembraneous catalytic core, and F(0) - containing the membrane proton channel, linked together by a central stalk and a peripheral stalk. During catalysis, ATP synthesis in the catalytic domain of F(1) is coupled via a rotary mechanism of the central stalk subunits to proton translocation. Subunits alpha and beta form the catalytic core in F(1). Rotation of the central stalk against the surrounding alpha(3)beta(3) subunits leads to hydrolysis of ATP in three separate catalytic sites on the beta subunits. Subunit alpha does not bear the catalytic high-affinity ATP-binding sites. The chain is ATP synthase subunit alpha, mitochondrial (ATPA) from Zea mays (Maize).